The sequence spans 452 residues: Cell division protein FtsZ (452 aa).

GTP contacts are provided by residues 24 to 28, 111 to 113, Glu142, Arg146, and Asp190; these read GAGSN and GTG. The tract at residues 432–452 is disordered; the sequence is DQDNKESDIHDIPAFLRKKRD. Over residues 433–442 the composition is skewed to basic and acidic residues; that stretch reads QDNKESDIHD.

The protein belongs to the FtsZ family. Homodimer. Polymerizes to form a dynamic ring structure in a strictly GTP-dependent manner. Interacts directly with several other division proteins.

It is found in the cytoplasm. Functionally, essential cell division protein that forms a contractile ring structure (Z ring) at the future cell division site. The regulation of the ring assembly controls the timing and the location of cell division. One of the functions of the FtsZ ring is to recruit other cell division proteins to the septum to produce a new cell wall between the dividing cells. Binds GTP and shows GTPase activity. The polypeptide is Cell division protein FtsZ (Rickettsia conorii (strain ATCC VR-613 / Malish 7)).